Reading from the N-terminus, the 206-residue chain is Charged multivesicular body protein 2a homolog 1 (206 aa).

Residues 1 to 32 are disordered; it reads MSFFGGNKKTPEQELKDSKRELSKGQREMDRE. A compositionally biased stretch (basic and acidic residues) spans 9–32; that stretch reads KTPEQELKDSKRELSKGQREMDRE. Coiled-coil stretches lie at residues 12 to 80 and 114 to 148; these read EQEL…RATK and NKQT…DMFE.

Belongs to the SNF7 family. Probable core component of the endosomal sorting required for transport complex III (ESCRT-III). ESCRT-III components are thought to multimerize to form a flat lattice on the perimeter membrane of the endosome.

It is found in the endosome membrane. Probable core component of the endosomal sorting required for transport complex III (ESCRT-III) which is involved in multivesicular bodies (MVBs) formation and sorting of endosomal cargo proteins into MVBs. MVBs contain intraluminal vesicles (ILVs) that are generated by invagination and scission from the limiting membrane of the endosome and are delivered to lysosomes enabling degradation of membrane proteins. The sequence is that of Charged multivesicular body protein 2a homolog 1 (chmp2a1) from Dictyostelium discoideum (Social amoeba).